The sequence spans 212 residues: Ribonuclease HII (212 aa).

The RNase H type-2 domain occupies 1–206 (MARFGVDEAG…SRDALGAAEQ (206 aa)). Residues aspartate 7, glutamate 8, and aspartate 100 each coordinate a divalent metal cation.

This sequence belongs to the RNase HII family. Mn(2+) is required as a cofactor. Requires Mg(2+) as cofactor.

The protein localises to the cytoplasm. The catalysed reaction is Endonucleolytic cleavage to 5'-phosphomonoester.. Its function is as follows. Endonuclease that specifically degrades the RNA of RNA-DNA hybrids. In Halobacterium salinarum (strain ATCC 29341 / DSM 671 / R1), this protein is Ribonuclease HII.